Consider the following 462-residue polypeptide: F-box/LRR-repeat protein At5g38396 (462 aa).

The 47-residue stretch at 1-47 (MDLLRNIPDELICHILSFLTTKEAALTSVLSKRWRNLLAFVSNLHID) folds into the F-box domain. 5 LRR repeats span residues 118-146 (SIDL…KLHR), 148-175 (CIGQ…ELDY), 197-222 (VDAF…TMSS), 302-333 (CLDL…SIKS), and 334-359 (AENR…VLEG).

This is F-box/LRR-repeat protein At5g38396 from Arabidopsis thaliana (Mouse-ear cress).